Reading from the N-terminus, the 184-residue chain is ATP synthase subunit b, chloroplastic (184 aa).

A helical transmembrane segment spans residues 27 to 49; that stretch reads LATNPINLSVVLGVLIFFGKGVL.

This sequence belongs to the ATPase B chain family. In terms of assembly, F-type ATPases have 2 components, F(1) - the catalytic core - and F(0) - the membrane proton channel. F(1) has five subunits: alpha(3), beta(3), gamma(1), delta(1), epsilon(1). F(0) has four main subunits: a(1), b(1), b'(1) and c(10-14). The alpha and beta chains form an alternating ring which encloses part of the gamma chain. F(1) is attached to F(0) by a central stalk formed by the gamma and epsilon chains, while a peripheral stalk is formed by the delta, b and b' chains.

The protein resides in the plastid. It is found in the chloroplast thylakoid membrane. Functionally, f(1)F(0) ATP synthase produces ATP from ADP in the presence of a proton or sodium gradient. F-type ATPases consist of two structural domains, F(1) containing the extramembraneous catalytic core and F(0) containing the membrane proton channel, linked together by a central stalk and a peripheral stalk. During catalysis, ATP synthesis in the catalytic domain of F(1) is coupled via a rotary mechanism of the central stalk subunits to proton translocation. In terms of biological role, component of the F(0) channel, it forms part of the peripheral stalk, linking F(1) to F(0). The sequence is that of ATP synthase subunit b, chloroplastic from Citrus sinensis (Sweet orange).